The following is an 88-amino-acid chain: ATP synthase F(0) complex subunit f, mitochondrial (88 aa).

N-acetylalanine is present on Ala2. Ser3 is modified (phosphoserine). Lys16 is subject to N6-acetyllysine. A helical transmembrane segment spans residues 62–79; it reads MVLAAYVFLNYCRSYKEL.

Component of the ATP synthase complex composed at least of ATP5F1A/subunit alpha, ATP5F1B/subunit beta, ATP5MC1/subunit c (homooctomer), MT-ATP6/subunit a, MT-ATP8/subunit 8, ATP5ME/subunit e, ATP5MF/subunit f, ATP5MG/subunit g, ATP5MK/subunit k, ATP5MJ/subunit j, ATP5F1C/subunit gamma, ATP5F1D/subunit delta, ATP5F1E/subunit epsilon, ATP5PF/subunit F6, ATP5PB/subunit b, ATP5PD/subunit d, ATP5PO/subunit OSCP. ATP synthase complex consists of a soluble F(1) head domain (subunits alpha(3) and beta(3)) - the catalytic core - and a membrane F(0) domain - the membrane proton channel (subunits c, a, 8, e, f, g, k and j). These two domains are linked by a central stalk (subunits gamma, delta, and epsilon) rotating inside the F1 region and a stationary peripheral stalk (subunits F6, b, d, and OSCP).

Its subcellular location is the mitochondrion. It is found in the mitochondrion inner membrane. Its function is as follows. Subunit f, of the mitochondrial membrane ATP synthase complex (F(1)F(0) ATP synthase or Complex V) that produces ATP from ADP in the presence of a proton gradient across the membrane which is generated by electron transport complexes of the respiratory chain. ATP synthase complex consist of a soluble F(1) head domain - the catalytic core - and a membrane F(1) domain - the membrane proton channel. These two domains are linked by a central stalk rotating inside the F(1) region and a stationary peripheral stalk. During catalysis, ATP synthesis in the catalytic domain of F(1) is coupled via a rotary mechanism of the central stalk subunits to proton translocation. In vivo, can only synthesize ATP although its ATP hydrolase activity can be activated artificially in vitro. Part of the complex F(0) domain. In Bos taurus (Bovine), this protein is ATP synthase F(0) complex subunit f, mitochondrial.